A 168-amino-acid chain; its full sequence is Secreted RxLR effector protein RXLR-C06 (168 aa).

Residues 1–22 (MRIQLLWLSFAVLSTILSTCDA) form the signal peptide. A disordered region spans residues 25-52 (DKLDPQRVQPNQNGSGHNQSIRSALKTS). Over residues 32–50 (VQPNQNGSGHNQSIRSALK) the composition is skewed to polar residues. Residues Asn37 and Asn42 are each glycosylated (N-linked (GlcNAc...) asparagine). A RxLR-dEER motif is present at residues 46–63 (RSALKTSHGKTIADDEER). The 30-residue stretch at 78–107 (YKAIVAKLSKYFRDYHERREIRKQRILNKS) folds into the IQ domain. Asn105 carries an N-linked (GlcNAc...) asparagine glycan.

The protein belongs to the RxLR effector family.

The protein resides in the secreted. It is found in the host Golgi apparatus. Its function is as follows. Secreted effector that suppresses pattern-triggered immunity (PTI) in plant host. This is Secreted RxLR effector protein RXLR-C06 from Plasmopara halstedii (Downy mildew of sunflower).